Reading from the N-terminus, the 219-residue chain is Casparian strip membrane protein 3 (219 aa).

Residues 1–43 form a disordered region; that stretch reads MDPGREDEVPLAATSPESRRTRSNGRGKATVGDAPPPAETVVS. Over 1-57 the chain is Cytoplasmic; that stretch reads MDPGREDEVPLAATSPESRRTRSNGRGKATVGDAPPPAETVVSTKAAPLPTGGWKKG. A helical transmembrane segment spans residues 58 to 78; the sequence is IAILDFILRLGAIGAAMGASI. The Extracellular portion of the chain corresponds to 79-108; it reads LMGTNEQILPFFTQFLQFHAQWDDFPVFKL. A helical transmembrane segment spans residues 109 to 129; that stretch reads FVVLNALAGGFLILSLPLSIV. Residues 130–147 are Cytoplasmic-facing; sequence CIVRPLAVGPRFLLLITD. The chain crosses the membrane as a helical span at residues 148-168; that stretch reads LVNMATVIAAASAAAAIVYVA. Over 169–193 the chain is Extracellular; it reads HNGSQDANWIAICQQFTDFCQGTSE. N-linked (GlcNAc...) asparagine glycosylation occurs at Asn170. The helical transmembrane segment at 194–214 threads the bilayer; the sequence is AVVVSFVAAVFLVCLIVVSTL. The Cytoplasmic portion of the chain corresponds to 215–219; it reads ALKRT.

The protein belongs to the Casparian strip membrane proteins (CASP) family. Homodimer and heterodimers.

It localises to the cell membrane. Functionally, regulates membrane-cell wall junctions and localized cell wall deposition. Required for establishment of the Casparian strip membrane domain (CSD) and the subsequent formation of Casparian strips, a cell wall modification of the root endodermis that determines an apoplastic barrier between the intraorganismal apoplasm and the extraorganismal apoplasm and prevents lateral diffusion. The protein is Casparian strip membrane protein 3 of Lotus japonicus (Lotus corniculatus var. japonicus).